A 72-amino-acid chain; its full sequence is Protein kish-A (72 aa).

Positions 1-26 (MSAIFNFQSLLTVILLLICTCAYIRS) are cleaved as a signal peptide. The Extracellular segment spans residues 27 to 53 (LAPSLLDRNKTGLLGIFWKCARIGERK). The N-linked (GlcNAc...) asparagine glycan is linked to Asn-35. A helical membrane pass occupies residues 54–71 (SPYVAVCCIVMAFSILFI). Gln-72 is a topological domain (cytoplasmic).

The protein belongs to the KISH family.

It localises to the golgi apparatus membrane. Functionally, involved in the early part of the secretory pathway. The polypeptide is Protein kish-A (TMEM167A) (Bos taurus (Bovine)).